A 702-amino-acid polypeptide reads, in one-letter code: Neurochondrin (702 aa).

It belongs to the neurochondrin family.

It localises to the cytoplasm. It is found in the cytosol. The protein resides in the cell projection. Its subcellular location is the dendrite. The protein localises to the postsynapse. Its function is as follows. Probably involved in signal transduction, in the nervous system. Required for the spatial learning process. May also be involved in neurite outgrowth. In Gallus gallus (Chicken), this protein is Neurochondrin (NCDN).